We begin with the raw amino-acid sequence, 118 residues long: Ribonuclease P protein component (118 aa).

Belongs to the RnpA family. In terms of assembly, consists of a catalytic RNA component (M1 or rnpB) and a protein subunit.

It carries out the reaction Endonucleolytic cleavage of RNA, removing 5'-extranucleotides from tRNA precursor.. In terms of biological role, RNaseP catalyzes the removal of the 5'-leader sequence from pre-tRNA to produce the mature 5'-terminus. It can also cleave other RNA substrates such as 4.5S RNA. The protein component plays an auxiliary but essential role in vivo by binding to the 5'-leader sequence and broadening the substrate specificity of the ribozyme. In Levilactobacillus brevis (strain ATCC 367 / BCRC 12310 / CIP 105137 / JCM 1170 / LMG 11437 / NCIMB 947 / NCTC 947) (Lactobacillus brevis), this protein is Ribonuclease P protein component.